We begin with the raw amino-acid sequence, 444 residues long: Trigger factor (444 aa).

A PPIase FKBP-type domain is found at 166–251; sequence GDQIVIDFKG…VKAVKAPKAA (86 aa).

Belongs to the FKBP-type PPIase family. Tig subfamily.

It is found in the cytoplasm. It catalyses the reaction [protein]-peptidylproline (omega=180) = [protein]-peptidylproline (omega=0). In terms of biological role, involved in protein export. Acts as a chaperone by maintaining the newly synthesized protein in an open conformation. Functions as a peptidyl-prolyl cis-trans isomerase. The polypeptide is Trigger factor (Paracoccus denitrificans (strain Pd 1222)).